Consider the following 126-residue polypeptide: Protein ApaG (126 aa).

The 125-residue stretch at 2 to 126 (TSLEDSIKVE…FRLAVPGMLH (125 aa)) folds into the ApaG domain.

The sequence is that of Protein ApaG from Shewanella sediminis (strain HAW-EB3).